A 206-amino-acid polypeptide reads, in one-letter code: MAAARASLGRILPESSILFLCDLQEKFRPSIAYFPQIVSVAARMLKVARLLDVPILLTEQYPEGLGPTVPELGAQGIRPVSKTCFSMVPALQKELDGRSQLQSVLLCGIETQACILNTALDLLHRGLQVHVVVDACSSRSQVDRLVALARMRQSGAFLATSESLILQLVRDASHPQFKEIQKIIKEPVPDSGLLSLFQGQSPLTSC.

Position 26 is an N6-succinyllysine (Lys-26). 2 positions are modified to N6-acetyllysine; alternate: Lys-93 and Lys-178. Lys-93 and Lys-178 each carry N6-succinyllysine; alternate. An N6-acetyllysine mark is found at Lys-182 and Lys-185.

It belongs to the isochorismatase family. In terms of assembly, interacts with CDKN2A. Ubiquitous. Expressed predominantly in uterus, stomach and urinary tract.

It localises to the cytoplasm. Its subcellular location is the nucleus. This chain is Isochorismatase domain-containing protein 2A, found in Mus musculus (Mouse).